Here is a 177-residue protein sequence, read N- to C-terminus: Transcription termination/antitermination protein NusG (177 aa).

The KOW domain maps to 128 to 156 (ETVKVIDGPFANFTGSIEEIDYDKSKVKV).

It belongs to the NusG family.

Functionally, participates in transcription elongation, termination and antitermination. Stimulates RNA polymerase pausing at U107 and U144 in the trp leader. NusG-stimulated pausing is sequence specific. Does not affect trp leader termination. This Bacillus subtilis (strain 168) protein is Transcription termination/antitermination protein NusG.